The sequence spans 810 residues: DNA-binding protein REB1 (810 aa).

Composition is skewed to basic and acidic residues over residues 1–10 (MPSGHNDKNA) and 29–44 (HQNHDPQLHTKDLENK). Disordered regions lie at residues 1–80 (MPSG…ENIS), 114–161 (NQQD…GVDD), 180–243 (NNNN…TNND), 294–313 (HGLNHQNKNHNDDTDDLSNS), and 346–365 (QDTQPHQQKSPSHDNEAGSV). Composition is skewed to low complexity over residues 51-64 (IVESSSDVDVNNND) and 124-135 (NNNTDNGNDSNN). A compositionally biased stretch (basic and acidic residues) spans 149–161 (DKNKKDAGVGVDD). Over residues 180–191 (NNNNNNSIANDS) the composition is skewed to low complexity. Over residues 198–208 (HDNGNNHENSQ) the composition is skewed to basic and acidic residues. Polar residues predominate over residues 346–355 (QDTQPHQQKS). Position 355 is a phosphoserine (Ser-355). Residues 470 to 523 (HIFEQRGKWTAEEEQELAKLCAEKEGQWAEIGKTLGRMPEDCRDRWRNYVKCGT) form the HTH myb-type domain. The segment at residues 497–519 (WAEIGKTLGRMPEDCRDRWRNYV) is a DNA-binding region (H-T-H motif). Positions 572 to 667 (QNDHRNNDED…STHSKSLSNT (96 aa)) are disordered. The segment covering 586–606 (ASAAAAAAAAIQEQQQLLQQK) has biased composition (low complexity). The span at 627-636 (DNKDEDKPHD) shows a compositional bias: basic and acidic residues. The span at 643 to 667 (DDNSQNSMVPAPSATSTHSKSLSNT) shows a compositional bias: polar residues. The 26-residue stretch at 692–717 (NWTIVSERMGGTRSRIQCRYKWNKLV) folds into the Myb-like domain. A Glycyl lysine isopeptide (Lys-Gly) (interchain with G-Cter in SUMO) cross-link involves residue Lys-807.

It localises to the nucleus. In terms of biological role, DNA-binding protein that recognizes sites within both the enhancer and the promoter of rRNA transcription, as well as upstream of many genes transcribed by RNA polymerase II. It is essential for cell growth. May stimulate or inhibit transcription. Specifically recognizes the sequence 5'-CCGGGTA-3' or 5'-CGGGTRR-3' (where R is any purine). A member of the general regulatory factors (GRFs) which act as genome partitioners. Acts as a chromatin insulator which are known as STARs (Subtelomeric anti-silencing region). STARs prevent negative or positive transcription influence by extending across chromatin to a promoter. The polypeptide is DNA-binding protein REB1 (REB1) (Saccharomyces cerevisiae (strain ATCC 204508 / S288c) (Baker's yeast)).